Consider the following 5571-residue polypeptide: Polyketide synthase GfsB (5571 aa).

The tract at residues 1-27 (MSVPPPGATPSRTSRTKGLKDRPRMEN) is disordered. Over residues 18-27 (GLKDRPRMEN) the composition is skewed to basic and acidic residues. The 427-residue stretch at 57 to 483 (QEPVAIIGMS…GTNAHVIIEQ (427 aa)) folds into the Ketosynthase family 3 (KS3) 1 domain. 3 module regions span residues 57–2148 (QEPV…RDTL), 2167–3728 (DEPL…GSQV), and 3746–5485 (DEPV…HTHL). Active-site for beta-ketoacyl synthase 1 activity residues include cysteine 230, histidine 365, and histidine 405. The interval 485 to 518 (PAIEGTGLGDDAPPTAEHPEERTPADGGPAPQPV) is disordered. The 316-residue stretch at 611–926 (FVFPGQGSQW…LRSLAEAYAH (316 aa)) folds into the Malonyl-CoA:ACP transacylase (MAT) 1 domain. Residues 976–1109 (HPLLAAATSL…GYLAVGAHEP (134 aa)) form an N-terminal hotdog fold 1 region. The PKS/mFAS DH 1 domain occupies 976 to 1264 (HPLLAAATSL…LRPLATNQAP (289 aa)). Histidine 1008 acts as the Proton acceptor; for dehydratase activity 1 in catalysis. A C-terminal hotdog fold 1 region spans residues 1122 to 1264 (ATPLDVTDLY…LRPLATNQAP (143 aa)). Catalysis depends on aspartate 1183, which acts as the Proton donor; for dehydratase activity 1. The 300-residue stretch at 1478–1777 (GTLDHLTLIP…QARHIGKIVL (300 aa)) folds into the Enoyl reductase (ER) domain. One can recognise a Ketoreductase (KR) 1 domain in the interval 1787 to 1966 (GTVLVTGATG…TSLAWGLWEE (180 aa)). Residues 2073–2148 (RIVNDLVRDH…ELAAHLRDTL (76 aa)) form the Carrier 1 domain. Serine 2108 bears the O-(pantetheine 4'-phosphoryl)serine mark. The Ketosynthase family 3 (KS3) 2 domain maps to 2167–2593 (DEPLAVVAMS…GTNAHVILEQ (427 aa)). Catalysis depends on for beta-ketoacyl synthase 2 activity residues cysteine 2340, histidine 2475, and histidine 2515. The Malonyl-CoA:ACP transacylase (MAT) 2 domain maps to 2710–3016 (VFSGQGSQRP…AAVALQRGNR (307 aa)). One can recognise a Ketoreductase (KR) 2 domain in the interval 3373–3551 (GTVLVTGGTG…VSVAWGPWAE (179 aa)). In terms of domain architecture, Carrier 2 spans 3653-3728 (TALLDLVRGQ…ALAEYVGSQV (76 aa)). Residue serine 3688 is modified to O-(pantetheine 4'-phosphoryl)serine. Positions 3746 to 4172 (DEPVAIIGMS…GTNAHVILEQ (427 aa)) constitute a Ketosynthase family 3 (KS3) 3 domain. Residues cysteine 3919, histidine 4054, and histidine 4094 each act as for beta-ketoacyl synthase 3 activity in the active site. Residues 4279 to 4601 (FLFSGQGSQR…ATAHVNGVQP (323 aa)) enclose the Malonyl-CoA:ACP transacylase (MAT) 3 domain. The segment at 4649–4774 (HPLLAGVVDL…GALTVAEAVD (126 aa)) is N-terminal hotdog fold 2. The PKS/mFAS DH 2 domain maps to 4649–4931 (HPLLAGVVDL…TRPIAAGQLA (283 aa)). The Proton acceptor; for dehydratase activity 2 role is filled by histidine 4681. A C-terminal hotdog fold 2 region spans residues 4787 to 4931 (AIEVELDDPY…TRPIAAGQLA (145 aa)). Residue aspartate 4848 is the Proton donor; for dehydratase activity 2 of the active site. In terms of domain architecture, Ketoreductase (KR) 3 spans 5134 to 5306 (LLVTGASGVL…TSLSWGLWAE (173 aa)). A Carrier 3 domain is found at 5410–5485 (RMVLDLVRDR…ALARYLHTHL (76 aa)). Serine 5445 is modified (O-(pantetheine 4'-phosphoryl)serine).

Requires pantetheine 4'-phosphate as cofactor.

Its pathway is antibiotic biosynthesis. In terms of biological role, second protein in the synthesis of the 16-membered macrolide antibiotics FD-891 and FD-892. Composed of 3 modules. Modifies the product of GfsA by multiple rounds of addition of malonyl-CoA or methylmalonyl-CoA and other modifications to help generate the final products. This is Polyketide synthase GfsB from Streptomyces halstedii.